Reading from the N-terminus, the 264-residue chain is Putative serine carboxypeptidase-like 53 (264 aa).

Positions 1–23 are cleaved as a signal peptide; it reads MGKLQDWSITTCLFLFFLHASQT. N-linked (GlcNAc...) asparagine glycans are attached at residues asparagine 65, asparagine 101, asparagine 153, and asparagine 184.

Belongs to the peptidase S10 family.

The protein resides in the secreted. This Arabidopsis thaliana (Mouse-ear cress) protein is Putative serine carboxypeptidase-like 53 (SCPL53).